A 197-amino-acid polypeptide reads, in one-letter code: Xanthine phosphoribosyltransferase (197 aa).

Residues leucine 20 and asparagine 27 each coordinate xanthine. Position 128–132 (128–132 (ANGQA)) interacts with 5-phospho-alpha-D-ribose 1-diphosphate. Lysine 156 lines the xanthine pocket.

It belongs to the purine/pyrimidine phosphoribosyltransferase family. Xpt subfamily. In terms of assembly, homodimer.

It is found in the cytoplasm. It carries out the reaction XMP + diphosphate = xanthine + 5-phospho-alpha-D-ribose 1-diphosphate. Its pathway is purine metabolism; XMP biosynthesis via salvage pathway; XMP from xanthine: step 1/1. In terms of biological role, converts the preformed base xanthine, a product of nucleic acid breakdown, to xanthosine 5'-monophosphate (XMP), so it can be reused for RNA or DNA synthesis. The polypeptide is Xanthine phosphoribosyltransferase (Bacillus cereus (strain ZK / E33L)).